The following is a 174-amino-acid chain: NADH-ubiquinone oxidoreductase chain 6 (174 aa).

Transmembrane regions (helical) follow at residues 1–21 (MTYV…GFSS), 24–44 (SPIY…GIVL), 46–66 (FGGS…MLVV), 86–106 (VMIL…VVYM), and 151–171 (WLMV…IEIT).

This sequence belongs to the complex I subunit 6 family. Core subunit of respiratory chain NADH dehydrogenase (Complex I) which is composed of 45 different subunits.

The protein localises to the mitochondrion inner membrane. The enzyme catalyses a ubiquinone + NADH + 5 H(+)(in) = a ubiquinol + NAD(+) + 4 H(+)(out). Core subunit of the mitochondrial membrane respiratory chain NADH dehydrogenase (Complex I) which catalyzes electron transfer from NADH through the respiratory chain, using ubiquinone as an electron acceptor. Essential for the catalytic activity and assembly of complex I. The polypeptide is NADH-ubiquinone oxidoreductase chain 6 (MT-ND6) (Oryctolagus cuniculus (Rabbit)).